A 457-amino-acid polypeptide reads, in one-letter code: Cysteine--tRNA ligase (457 aa).

Cys28 lines the Zn(2+) pocket. The short motif at 30-40 (ITVYDLCHIGH) is the 'HIGH' region element. Zn(2+) is bound by residues Cys209, His234, and Glu238. The short motif at 266-270 (KMSKS) is the 'KMSKS' region element. Lys269 serves as a coordination point for ATP.

This sequence belongs to the class-I aminoacyl-tRNA synthetase family. Monomer. Requires Zn(2+) as cofactor.

The protein localises to the cytoplasm. The enzyme catalyses tRNA(Cys) + L-cysteine + ATP = L-cysteinyl-tRNA(Cys) + AMP + diphosphate. This Sodalis glossinidius (strain morsitans) protein is Cysteine--tRNA ligase.